Reading from the N-terminus, the 66-residue chain is Large ribosomal subunit protein bL35 (66 aa).

Basic residues predominate over residues 1–26; the sequence is MPKMKTHRGSAKRFKKTGSGKLKRSH. The tract at residues 1-48 is disordered; it reads MPKMKTHRGSAKRFKKTGSGKLKRSHAYTSHLFANKSQKQKRKLRKSA.

Belongs to the bacterial ribosomal protein bL35 family. Part of the 50S ribosomal subunit.

The chain is Large ribosomal subunit protein bL35 from Bacillus subtilis (strain 168).